The primary structure comprises 402 residues: AA9 family lytic polysaccharide monooxygenase E (402 aa).

The first 16 residues, 1 to 16 (MSRLVSFASLLAAVNA), serve as a signal peptide directing secretion. Residue His-17 participates in Cu(2+) binding. 2 disulfide bridges follow: Cys-72–Cys-194 and Cys-113–Cys-117. Asn-75 carries N-linked (GlcNAc...) asparagine glycosylation. Residue His-102 participates in Cu(2+) binding. Asn-154 carries an N-linked (GlcNAc...) asparagine glycan. O2-binding residues include His-180 and Gln-189. Tyr-191 contacts Cu(2+). The CBM1 domain occupies 364–400 (GSNPLYAQCGGLNFKGASGCVAGATCKKMNPYYSQCV).

It belongs to the polysaccharide monooxygenase AA9 family. It depends on Cu(2+) as a cofactor.

The protein resides in the secreted. It carries out the reaction [(1-&gt;4)-beta-D-glucosyl]n+m + reduced acceptor + O2 = 4-dehydro-beta-D-glucosyl-[(1-&gt;4)-beta-D-glucosyl]n-1 + [(1-&gt;4)-beta-D-glucosyl]m + acceptor + H2O.. Its function is as follows. Lytic polysaccharide monooxygenase (LPMO) that depolymerizes crystalline and amorphous polysaccharides via the oxidation of scissile alpha- or beta-(1-4)-glycosidic bonds, yielding C1 or C4 oxidation products. Catalysis by LPMOs requires the reduction of the active-site copper from Cu(II) to Cu(I) by a reducing agent and H(2)O(2) or O(2) as a cosubstrate. The chain is AA9 family lytic polysaccharide monooxygenase E from Emericella nidulans (strain FGSC A4 / ATCC 38163 / CBS 112.46 / NRRL 194 / M139) (Aspergillus nidulans).